The chain runs to 759 residues: Subtilisin-like serine-protease S (759 aa).

An N-terminal signal peptide occupies residues 1-22; it reads MGSAKILSFTLLLFVGYTLVHG. An Inhibitor I9 domain is found at 28-105; that stretch reads YIVYMGDRSH…SVFESKMNKL (78 aa). The region spanning 110–613 is the Peptidase S8 domain; that stretch reads SWDFLGLDTV…SGHVNPVASL (504 aa). Aspartate 139 (charge relay system) is an active-site residue. Asparagine 170 carries an N-linked (GlcNAc...) asparagine glycan. Histidine 215 serves as the catalytic Charge relay system. 2 N-linked (GlcNAc...) asparagine glycosylation sites follow: asparagine 230 and asparagine 388. The 73-residue stretch at 390–462 folds into the PA domain; sequence SFCKEHTLDP…MIGQDAVEEL (73 aa). The Charge relay system role is filled by serine 545. Asparagine 593, asparagine 642, and asparagine 671 each carry an N-linked (GlcNAc...) asparagine glycan.

The protein belongs to the peptidase S8 family.

It localises to the secreted. The protein localises to the extracellular space. It is found in the apoplast. In terms of biological role, required for arbuscular mycorrhiza (AM) development during AM symbiosis with AM fungi (e.g. Glomeromycota intraradices). The sequence is that of Subtilisin-like serine-protease S from Lotus japonicus (Lotus corniculatus var. japonicus).